The primary structure comprises 381 residues: Cytochrome b (381 aa).

A run of 4 helical transmembrane segments spans residues 34 to 54, 78 to 99, 114 to 134, and 179 to 199; these read FGSL…FLAM, WLIR…YLHI, WNIG…GYVL, and FFAF…IHLL. Residues H84 and H98 each coordinate heme b. Heme b is bound by residues H183 and H197. H202 contributes to the a ubiquinone binding site. Transmembrane regions (helical) follow at residues 227–247, 289–309, 321–341, and 348–368; these read YKDL…ALFM, LGGV…PLLH, LTQI…WIGG, and FITV…IIMP.

This sequence belongs to the cytochrome b family. As to quaternary structure, the cytochrome bc1 complex contains 3 respiratory subunits (MT-CYB, CYC1 and UQCRFS1), 2 core proteins (UQCRC1 and UQCRC2) and probably 6 low-molecular weight proteins. Requires heme b as cofactor.

The protein localises to the mitochondrion inner membrane. Its function is as follows. Component of the ubiquinol-cytochrome c reductase complex (complex III or cytochrome b-c1 complex) that is part of the mitochondrial respiratory chain. The b-c1 complex mediates electron transfer from ubiquinol to cytochrome c. Contributes to the generation of a proton gradient across the mitochondrial membrane that is then used for ATP synthesis. In Sphyrna lewini (Scalloped hammerhead shark), this protein is Cytochrome b (mt-cyb).